The chain runs to 647 residues: Putative lipase atg15 (647 aa).

At 1 to 18 the chain is on the cytoplasmic side; the sequence is MLPSGKRKADAFSCTSAA. The chain crosses the membrane as a helical; Signal-anchor for type II membrane protein span at residues 19–39; that stretch reads RVTAKLALSFLALSTTPLVNA. The Lumenal segment spans residues 40-647; sequence FSYEEPNAQI…EGGEGPVNDL (608 aa). N-linked (GlcNAc...) asparagine glycosylation is found at Asn203, Asn225, Asn283, and Asn307. Ser323 serves as the catalytic Charge relay system. A glycan (N-linked (GlcNAc...) asparagine) is linked at Asn469. Residues 597-626 are disordered; it reads APALPSSVLTPSATATPPEGQPDDSGKRCR.

Belongs to the AB hydrolase superfamily. Lipase family. In terms of assembly, binds to both phosphatidylinositol (PI) and phosphatidylinositol 3,5-bisphosphate (PIP2).

The protein resides in the endosome. Its subcellular location is the multivesicular body membrane. It localises to the prevacuolar compartment membrane. It catalyses the reaction a triacylglycerol + H2O = a diacylglycerol + a fatty acid + H(+). Lipase which is essential for lysis of subvacuolar cytoplasm to vacuole targeted bodies and intravacuolar autophagic bodies. Involved in the lysis of intravacuolar multivesicular body (MVB) vesicles. The intravacuolar membrane disintegration by atg15 is critical to life span extension. This chain is Putative lipase atg15 (atg15), found in Neurospora crassa (strain ATCC 24698 / 74-OR23-1A / CBS 708.71 / DSM 1257 / FGSC 987).